Consider the following 342-residue polypeptide: MTNGYIGSYTKKNGKGIYRFELNENQSRIDLLETGFELEASTYLLRNNEVLYGINKEGEQCGVASLKIDDNGELHLLNKCLSSKAGTGCYVSISEDKRYLFEAVYGAGIIRMYELNTHTGEIIRLIQELAHDFPTGTHERQDHPHAHYINQTPDGKYVAVTDLGADRIVTYKFDDNGFEFYKESLFKDSDGTRHIEFHDNGKFAYVVHELSNTVSVAEYNDGKFEELERHLTIPENFDGDTKLAAVRLSHDQQFLYVSNRGHDSIAIFKVLDNGQHLELVTITESGGQFPRDFNIASSDDLLVCAHEQGDSVVTVFERNKETGKITLCDNTRVASEGVCVIF.

It belongs to the cycloisomerase 2 family.

This is an uncharacterized protein from Staphylococcus aureus (strain MSSA476).